The chain runs to 355 residues: 45 kDa calcium-binding protein (355 aa).

Positions 1–29 (MASRQGPLCGLAPCCLWLLGVILLMNASA) are cleaved as a signal peptide. An N-linked (GlcNAc...) asparagine glycan is attached at Asn-26. 2 consecutive EF-hand domains span residues 91 to 126 (KSRRKLMVIFSKVDLNTDRRISAKEMQKWIMQKTAE) and 130 to 165 (EAVAESRAHFRAVDPDGDGHVSWDEYKVKFLATKGH). The residue at position 92 (Ser-92) is a Phosphoserine. Residues Asp-104, Asn-106, Asp-108, Arg-110, Glu-115, Asp-143, Asp-145, Asp-147, His-149, and Glu-154 each coordinate Ca(2+). Phosphothreonine is present on residues Thr-186 and Thr-210. EF-hand domains are found at residues 226–261 (MLQFMVKEIIRDLDQDGDKKLSLSEFISLPVGTVEN), 271–306 (WVRDRKREFEELIDANHDGIVTMAELEDYMDPMNEF), and 307–342 (SALNEAKQMIAIADENQNHYLEPEEVLKYSEFFTGS). Positions 239, 241, 243, 245, and 250 each coordinate Ca(2+). At Thr-258 the chain carries Phosphothreonine. Ca(2+) contacts are provided by Asp-284, Asn-286, and Asp-288. Position 292 is a phosphothreonine (Thr-292). Ca(2+) is bound by residues Glu-295, Asp-320, Asn-322, Asn-324, Tyr-326, and Glu-331. The necessary for intracellular retention in Golgi apparatus lumen stretch occupies residues 302–355 (PMNEFSALNEAKQMIAIADENQNHYLEPEEVLKYSEFFTGSKLVDYARSVHEEF).

Belongs to the CREC family.

The protein localises to the golgi apparatus lumen. May regulate calcium-dependent activities in the endoplasmic reticulum lumen or post-ER compartment. The chain is 45 kDa calcium-binding protein (SDF4) from Capra hircus (Goat).